The chain runs to 273 residues: SPRY domain-containing SOCS box protein 1 (273 aa).

A Phosphotyrosine modification is found at Tyr-31. One can recognise a B30.2/SPRY domain in the interval 33 to 231 (KPTRLDLLLD…IRMRYLNGLD (199 aa)). An SOCS box domain is found at 232-273 (PEPLPLMDLCRRSVRLALGKGRLGEIHALPLPASLKAYLLYQ).

The protein belongs to the SPSB family. Component of the probable ECS(SPSB1) E3 ubiquitin-protein ligase complex which contains CUL5, RNF7/RBX2, Elongin BC complex and SPSB1. Interacts with CUL5, RNF7, ELOB and ELOC. Directly interacts with MET tyrosine kinase domain in the presence and in the absence of HGF, however HGF treatment has a positive effect on this interaction. When phosphorylated, interacts with RASA1 without affecting its stability. Interacts (via B30.2/SPRY domain) with PAWR; this interaction is direct and occurs in association with the Elongin BC complex. Interacts with NOS2 and EPHB2.

The protein resides in the cytoplasm. It localises to the cytosol. The protein operates within protein modification; protein ubiquitination. In terms of biological role, substrate recognition component of a SCF-like ECS (Elongin BC-CUL2/5-SOCS-box protein) E3 ubiquitin-protein ligase complex which mediates the ubiquitination and subsequent proteasomal degradation of target proteins. Negatively regulates nitric oxide (NO) production and limits cellular toxicity in activated macrophages by mediating the ubiquitination and proteasomal degradation of NOS2. Acts as a bridge which links NOS2 with the ECS E3 ubiquitin ligase complex components ELOC and CUL5. The protein is SPRY domain-containing SOCS box protein 1 (SPSB1) of Bos taurus (Bovine).